The sequence spans 201 residues: MRRKLVLASNNAGKVRELQTLISTSGFEIVPQGALGIPEAEETGASFVENALIKAYHAARHSGLPAIADDSGLEVDALGGEPGVHSARYAGPAASDDDNIDRLLAALDGVEAGRRGARFRCVMVFVRDAEDTGPLIAEGCWEGWIGENRRGSGGFGYDPVFLVPGTGLSAAELPPEDKNRLSHRGQAAAVLASRLRALTGG.

A substrate-binding site is contributed by 9–14 (SNNAGK). The Mg(2+) site is built by E41 and D70. The Proton acceptor role is filled by D70. Substrate contacts are provided by residues S71, 155 to 158 (FGYD), K178, and 183 to 184 (HR).

Belongs to the HAM1 NTPase family. In terms of assembly, homodimer. Mg(2+) serves as cofactor.

The catalysed reaction is XTP + H2O = XMP + diphosphate + H(+). The enzyme catalyses dITP + H2O = dIMP + diphosphate + H(+). It carries out the reaction ITP + H2O = IMP + diphosphate + H(+). Pyrophosphatase that catalyzes the hydrolysis of nucleoside triphosphates to their monophosphate derivatives, with a high preference for the non-canonical purine nucleotides XTP (xanthosine triphosphate), dITP (deoxyinosine triphosphate) and ITP. Seems to function as a house-cleaning enzyme that removes non-canonical purine nucleotides from the nucleotide pool, thus preventing their incorporation into DNA/RNA and avoiding chromosomal lesions. The polypeptide is dITP/XTP pyrophosphatase (Methylococcus capsulatus (strain ATCC 33009 / NCIMB 11132 / Bath)).